We begin with the raw amino-acid sequence, 390 residues long: Nuclear receptor subfamily 2 group F member 6 (390 aa).

The segment covering Met1–Thr15 has biased composition (gly residues). Residues Met1 to Arg50 are disordered. Residues Ser35 and Ser41 each carry the phosphoserine modification. The nuclear receptor DNA-binding region spans Gln54–Pro129. 2 NR C4-type zinc fingers span residues Cys57–Cys77 and Cys93–Cys117. Residues Pro157–Gly380 enclose the NR LBD domain. The segment at Leu314 to Gly390 is important for dimerization.

It belongs to the nuclear hormone receptor family. NR2 subfamily. As to quaternary structure, binds DNA as dimer; homodimer and heterodimer with NR2F2 and probably NR2F1. Interacts with THRB.

The protein resides in the nucleus. Its function is as follows. Transcription factor predominantly involved in transcriptional repression. Binds to promoter/enhancer response elements that contain the imperfect 5'-AGGTCA-3' direct or inverted repeats with various spacings which are also recognized by other nuclear hormone receptors. Involved in modulation of hormonal responses. Represses transcriptional activity of the lutropin-choriogonadotropic hormone receptor/LHCGR gene, the renin/REN gene and the oxytocin-neurophysin/OXT gene. Represses the triiodothyronine-dependent and -independent transcriptional activity of the thyroid hormone receptor gene in a cell type-specific manner. The corepressing function towards thyroid hormone receptor beta/THRB involves at least in part the inhibition of THRB binding to triiodothyronine response elements (TREs) by NR2F6. Inhibits NFATC transcription factor DNA binding and subsequently its transcriptional activity. Acts as transcriptional repressor of IL-17 expression in Th-17 differentiated CD4(+) T cells and may be involved in induction and/or maintenance of peripheral immunological tolerance and autoimmunity. Involved in development of forebrain circadian clock; is required early in the development of the locus coeruleus (LC). The sequence is that of Nuclear receptor subfamily 2 group F member 6 (Nr2f6) from Rattus norvegicus (Rat).